The sequence spans 487 residues: Glutamyl-tRNA(Gln) amidotransferase subunit A (487 aa).

Active-site charge relay system residues include Lys-77 and Ser-152. Ser-176 (acyl-ester intermediate) is an active-site residue.

It belongs to the amidase family. GatA subfamily. As to quaternary structure, heterotrimer of A, B and C subunits.

The enzyme catalyses L-glutamyl-tRNA(Gln) + L-glutamine + ATP + H2O = L-glutaminyl-tRNA(Gln) + L-glutamate + ADP + phosphate + H(+). Its function is as follows. Allows the formation of correctly charged Gln-tRNA(Gln) through the transamidation of misacylated Glu-tRNA(Gln) in organisms which lack glutaminyl-tRNA synthetase. The reaction takes place in the presence of glutamine and ATP through an activated gamma-phospho-Glu-tRNA(Gln). This Ligilactobacillus salivarius (strain UCC118) (Lactobacillus salivarius) protein is Glutamyl-tRNA(Gln) amidotransferase subunit A.